A 62-amino-acid polypeptide reads, in one-letter code: Chromatin protein Cren7 2 (62 aa).

The protein belongs to the Cren7 family. Monomer. In terms of processing, methylated at multiple sites, to varying extents.

It is found in the chromosome. It localises to the cytoplasm. In terms of biological role, a chromatin protein, binds double-stranded DNA without sequence specificity. Constrains negative DNA supercoils. The polypeptide is Chromatin protein Cren7 2 (cren7-2) (Hyperthermus butylicus (strain DSM 5456 / JCM 9403 / PLM1-5)).